The primary structure comprises 371 residues: Protein NDRG2 (371 aa).

Positions 1–21 (MAELQEVQITEEKPLLPGQTP) are disordered. Position 2 is an N-acetylalanine (A2). The residue at position 20 (T20) is a Phosphothreonine. A phosphoserine mark is found at S326 and S328. T330 carries the phosphothreonine modification. Residue S332 is modified to Phosphoserine. A Phosphothreonine modification is found at T334. Residues 334-371 (TSAASVDGNRSRSRTLSQSSESGTLSSGPPGHTMEVSC) form a disordered region. A phosphoserine mark is found at S335, S338, and S344. Residues 347 to 361 (RTLSQSSESGTLSSG) are compositionally biased toward low complexity. The residue at position 348 (T348) is a Phosphothreonine. S350, S352, S353, and S355 each carry phosphoserine. T357 is subject to Phosphothreonine. At S370 the chain carries Phosphoserine.

This sequence belongs to the NDRG family. Interacts with CTNNB1. As to expression, highly expressed in brain, heart, skeletal muscle and salivary gland, and moderately in kidney and liver. Expressed in dendritic cells, but not in other blood cells. Expression levels are low in pancreatic and liver cancer tissues; absent in meningioma. Expressed in low-grade gliomas but present at low levels in glioblastoma. Isoform 1 and isoform 2 are present in brain neurons and up-regulated in Alzheimer disease (at protein level).

It is found in the cytoplasm. Its subcellular location is the perinuclear region. The protein resides in the cell projection. The protein localises to the growth cone. Contributes to the regulation of the Wnt signaling pathway. Down-regulates CTNNB1-mediated transcriptional activation of target genes, such as CCND1, and may thereby act as tumor suppressor. May be involved in dendritic cell and neuron differentiation. The protein is Protein NDRG2 (NDRG2) of Homo sapiens (Human).